Consider the following 204-residue polypeptide: Peptide deformylase (204 aa).

Cys-131 and His-174 together coordinate Fe cation. Residue Glu-175 is part of the active site. Residue His-178 participates in Fe cation binding.

This sequence belongs to the polypeptide deformylase family. Fe(2+) is required as a cofactor.

The enzyme catalyses N-terminal N-formyl-L-methionyl-[peptide] + H2O = N-terminal L-methionyl-[peptide] + formate. Removes the formyl group from the N-terminal Met of newly synthesized proteins. Requires at least a dipeptide for an efficient rate of reaction. N-terminal L-methionine is a prerequisite for activity but the enzyme has broad specificity at other positions. The polypeptide is Peptide deformylase (Streptococcus gordonii (strain Challis / ATCC 35105 / BCRC 15272 / CH1 / DL1 / V288)).